The chain runs to 236 residues: uncharacterized protein (236 aa).

Positions 217–236 (GESPDNVVRGEGGFGSTGGH) are disordered. Residues 226-236 (GEGGFGSTGGH) are compositionally biased toward gly residues.

This is an uncharacterized protein from Ostreid herpesvirus 1 (isolate France) (OsHV-1).